The sequence spans 665 residues: Syntabulin (665 aa).

Basic and acidic residues predominate over residues M1–R22. The tract at residues M1 to Y271 is disordered. The interval G2–E421 is sufficient for interaction with KIF5B. The span at P35–P52 shows a compositional bias: low complexity. Position 54 is a phosphoserine (S54). A compositionally biased stretch (low complexity) spans F61 to S77. A compositionally biased stretch (polar residues) spans C85–G101. Residue S111 is modified to Phosphoserine. Positions G141–S162 are enriched in low complexity. The segment covering M168 to R180 has biased composition (polar residues). The span at S225–S245 shows a compositional bias: low complexity. Residues L275–K357 adopt a coiled-coil conformation. Positions R314–E421 are sufficient for interaction with STX1A. Phosphoserine is present on residues S400 and S557. Residues F609–S629 traverse the membrane as a helical segment.

Interacts with STX1A and KIF5B.

It is found in the golgi apparatus membrane. Its function is as follows. Part of a kinesin motor-adapter complex that is critical for the anterograde axonal transport of active zone components and contributes to activity-dependent presynaptic assembly during neuronal development. This Mus musculus (Mouse) protein is Syntabulin (Sybu).